A 332-amino-acid chain; its full sequence is Protoheme IX farnesyltransferase (332 aa).

The next 7 helical transmembrane spans lie at 63–83, 109–129, 132–152, 160–180, 188–208, 245–265, and 286–306; these read LICT…LNCL, TVFL…ISGV, LAAG…TIIL, IVFG…AATG, WLFS…AILL, ILGV…LLPF, and AKGL…LLLI.

Belongs to the UbiA prenyltransferase family. Protoheme IX farnesyltransferase subfamily.

The protein localises to the cell inner membrane. The catalysed reaction is heme b + (2E,6E)-farnesyl diphosphate + H2O = Fe(II)-heme o + diphosphate. The protein operates within porphyrin-containing compound metabolism; heme O biosynthesis; heme O from protoheme: step 1/1. Converts heme B (protoheme IX) to heme O by substitution of the vinyl group on carbon 2 of heme B porphyrin ring with a hydroxyethyl farnesyl side group. The sequence is that of Protoheme IX farnesyltransferase from Prochlorococcus marinus subsp. pastoris (strain CCMP1986 / NIES-2087 / MED4).